Consider the following 325-residue polypeptide: Tumor necrosis factor soluble receptor (325 aa).

An N-terminal signal peptide occupies residues 1-16; it reads MLRLIALLVCVVYVYG. TNFR-Cys repeat units follow at residues 27–62, 63–104, 105–147, and 148–186; these read KCGGHDYEKDGLCCASCHPGFYASRLCGPGSNTVCS, PCED…DRVC, NCST…TLCE, and KCPPHTYSDSLSPTERCGTSFNYISVGFNLYPVNETSCT. 6 disulfide bridges follow: Cys28/Cys39, Cys40/Cys53, Cys43/Cys61, Cys64/Cys79, Cys82/Cys96, and Cys86/Cys104. N-linked (GlcNAc...) asparagine; by host glycosylation is present at Asn105. 4 disulfides stabilise this stretch: Cys106–Cys120, Cys123–Cys146, Cys129–Cys149, and Cys164–Cys185. Asn181, Asn205, and Asn238 each carry an N-linked (GlcNAc...) asparagine; by host glycan.

Its function is as follows. Binds to TNF-alpha and beta. Probably prevents TNF to reach cellular target and thereby deampening the potential antiviral effects of the cytokine. The protein is Tumor necrosis factor soluble receptor of Oryctolagus cuniculus (Rabbit).